Reading from the N-terminus, the 685-residue chain is MLVLQRIPKRALQFNGVTGTVCSTRLFHHAFNLNLQQSFVPSEERRYRNSNRGFTRGSDSNSNNKYRNSSYDDNRSRSNYGGDKRNNRNNNNYGNNRNNGSRRRYQDENSDIEVFKSKSFNVTTLNPESFHEQVTIDSLLEESLLDANVHKAISAMKFESLTPVQQRTIKPILTTENDVVAKAKTGTGKTLAFLAPLFQHLISTKLQNPLAVKAVIVTPTRDLAIQIASEVKKLQQCNPSLKSYRSLTLIGGTNLDKSLKDLHTLNPNIIVGTPGRINDILDRVGAKYFKDVDFKVLDEADTLLQIGFQTELSLISRKLNEFNTQGEEHIRTLLFSATMDHNVQELAATIMNKKDCLFIDTVDKNDSEAHDSIDQKLVITKSFAESMVALIQSIESELLQKKNFKAILFLPTVKFVDFFSETLSESLTKRIDIIKFHGKIDQKKRTKLVDRFKKTNHGIFVCTDVGARGMHFPSVEHVYQLCVPTSLPNYIHRIGRTARAGESGAATIFLFREELKFVDELRRDTNVVIKNQEDYLNQDKENFDMISSIITNNPDFPEALKSIIGFYKGVQNEYRLNYKVAQNVLRSFSELHSDSSMLLRFRPSEINNFFSNRDMRFVSDLIDVKNPHSFGKDREFDDEDRYTSRSQNNYKSKQSSKSNRFEGRNDYSNSRRSHANQKRNFTFDD.

The transit peptide at 1–34 (MLVLQRIPKRALQFNGVTGTVCSTRLFHHAFNLN) directs the protein to the mitochondrion. The interval 42-107 (SEERRYRNSN…NNGSRRRYQD (66 aa)) is disordered. Positions 58–69 (SDSNSNNKYRNS) are enriched in low complexity. The segment covering 70–86 (SYDDNRSRSNYGGDKRN) has biased composition (basic and acidic residues). Residues 88–99 (RNNNNYGNNRNN) are compositionally biased toward low complexity. The Q motif signature appears at 138–166 (SLLEESLLDANVHKAISAMKFESLTPVQQ). The Helicase ATP-binding domain maps to 170–357 (KPILTTENDV…ATIMNKKDCL (188 aa)). Position 183–190 (183–190 (AKTGTGKT)) interacts with ATP. The short motif at 298–301 (DEAD) is the DEAD box element. The 157-residue stretch at 386 to 542 (SMVALIQSIE…EDYLNQDKEN (157 aa)) folds into the Helicase C-terminal domain. The disordered stretch occupies residues 633-685 (DREFDDEDRYTSRSQNNYKSKQSSKSNRFEGRNDYSNSRRSHANQKRNFTFDD). Positions 644 to 658 (SRSQNNYKSKQSSKS) are enriched in low complexity.

This sequence belongs to the DEAD box helicase family. DDX18/HAS1 subfamily.

Its subcellular location is the mitochondrion matrix. It carries out the reaction ATP + H2O = ADP + phosphate + H(+). ATP-dependent RNA helicase required for mitochondrial splicing of group I and II introns. Also required for efficient mitochondrial translation. The protein is ATP-dependent RNA helicase MSS116, mitochondrial (MSS116) of Kluyveromyces lactis (strain ATCC 8585 / CBS 2359 / DSM 70799 / NBRC 1267 / NRRL Y-1140 / WM37) (Yeast).